The primary structure comprises 314 residues: Malate dehydrogenase (314 aa).

NAD(+) is bound by residues 12–17 (GAGFTG) and D36. Substrate is bound by residues R87 and R93. NAD(+) is bound by residues N100 and 123–125 (LTN). Substrate is bound at residue N125. Position 149 is a phosphoserine (S149). A substrate-binding site is contributed by R156. H180 serves as the catalytic Proton acceptor.

It belongs to the LDH/MDH superfamily. MDH type 3 family.

The enzyme catalyses (S)-malate + NAD(+) = oxaloacetate + NADH + H(+). Its function is as follows. Catalyzes the reversible oxidation of malate to oxaloacetate. The polypeptide is Malate dehydrogenase (Halalkalibacterium halodurans (strain ATCC BAA-125 / DSM 18197 / FERM 7344 / JCM 9153 / C-125) (Bacillus halodurans)).